Here is a 96-residue protein sequence, read N- to C-terminus: Small ribosomal subunit protein bS18 (96 aa).

The segment covering 1 to 22 has biased composition (basic and acidic residues); that stretch reads MYKDIDSHQRDSRTDGHQDGFK. Residues 1-25 form a disordered region; that stretch reads MYKDIDSHQRDSRTDGHQDGFKKNP.

Belongs to the bacterial ribosomal protein bS18 family. Part of the 30S ribosomal subunit. Forms a tight heterodimer with protein bS6.

Its function is as follows. Binds as a heterodimer with protein bS6 to the central domain of the 16S rRNA, where it helps stabilize the platform of the 30S subunit. The polypeptide is Small ribosomal subunit protein bS18 (Borrelia duttonii (strain Ly)).